The chain runs to 597 residues: Putative heat shock protein HSP 90-beta-3 (597 aa).

ATP contacts are provided by N46, D88, and K107. Residues 201-241 (DKEISDDEAEEEKGEKEEEDKDDEEKPKIKDVGSDEEDDSK) are disordered. A compositionally biased stretch (acidic residues) spans 204–223 (ISDDEAEEEKGEKEEEDKDD). The segment covering 224–233 (EEKPKIKDVG) has biased composition (basic and acidic residues). ATP is bound at residue R334. A coiled-coil region spans residues 414-446 (LELPEDEEEKKKMEESKEKFENLCKLMKEILDK). The segment covering 564 to 578 (DEDEVAAEEPSDAVP) has biased composition (acidic residues). The disordered stretch occupies residues 564–597 (DEDEVAAEEPSDAVPDEIPPLEGDEDASRMEEVD). Residues 593-597 (MEEVD) carry the TPR repeat-binding motif.

This sequence belongs to the heat shock protein 90 family. Homodimer.

The protein localises to the cytoplasm. Putative molecular chaperone that may promote the maturation, structural maintenance and proper regulation of specific target proteins. This is Putative heat shock protein HSP 90-beta-3 (HSP90AB3P) from Homo sapiens (Human).